A 389-amino-acid chain; its full sequence is cAMP-dependent protein kinase regulatory subunit (389 aa).

Disordered stretches follow at residues 1-57 and 87-110; these read MSEN…KFAG and SVSA…PPYH. The tract at residues 1 to 128 is dimerization and phosphorylation; sequence MSENTFPGRL…RLKKSISGNF (128 aa). Residues 21-31 show a composition bias toward polar residues; sequence AANTEKPSTSH. The segment covering 34 to 43 has biased composition (basic and acidic residues); sequence RVTERDEDKV. Position 87 is a phosphoserine (serine 87). The span at 87–105 shows a compositional bias: polar residues; that stretch reads SVSAESLNPNPTASSNESW. 3',5'-cyclic AMP contacts are provided by residues 129–258, glutamate 207, arginine 216, 261–377, glutamate 327, and arginine 336; these read LFNH…FLEE and LLST…GVEE.

This sequence belongs to the cAMP-dependent kinase regulatory chain family. As to quaternary structure, tetramer, composed of 2 regulatory (R) and 2 catalytic (C) subunits. In the presence of cAMP it dissociates into 2 active monomeric C subunits and an R dimer.

The protein is cAMP-dependent protein kinase regulatory subunit (pkar) of Blumeria graminis (Powdery mildew).